The sequence spans 262 residues: Ribose-5-phosphate isomerase A (262 aa).

Residues 33-36 (TGST), 89-92 (DGTD), and 102-105 (KGGG) each bind substrate. E111 (proton acceptor) is an active-site residue. K129 contacts substrate.

The protein belongs to the ribose 5-phosphate isomerase family. In terms of assembly, homodimer.

The enzyme catalyses aldehydo-D-ribose 5-phosphate = D-ribulose 5-phosphate. Its pathway is carbohydrate degradation; pentose phosphate pathway; D-ribose 5-phosphate from D-ribulose 5-phosphate (non-oxidative stage): step 1/1. Its function is as follows. Catalyzes the reversible conversion of ribose-5-phosphate to ribulose 5-phosphate. The chain is Ribose-5-phosphate isomerase A from Jannaschia sp. (strain CCS1).